The following is a 481-amino-acid chain: Protein nucleotidyltransferase YdiU (481 aa).

ATP contacts are provided by Gly85, Gly87, Arg88, Lys108, Asp120, Gly121, Arg171, and Arg178. Asp248 functions as the Proton acceptor in the catalytic mechanism. 2 residues coordinate Mg(2+): Asn249 and Asp258. Asp258 contacts ATP. Residues 458–481 (HPGLAEFQQPPTPEQKGLQLSCSS) form a disordered region.

The protein belongs to the SELO family. Mg(2+) is required as a cofactor. Mn(2+) serves as cofactor.

The catalysed reaction is L-seryl-[protein] + ATP = 3-O-(5'-adenylyl)-L-seryl-[protein] + diphosphate. The enzyme catalyses L-threonyl-[protein] + ATP = 3-O-(5'-adenylyl)-L-threonyl-[protein] + diphosphate. It catalyses the reaction L-tyrosyl-[protein] + ATP = O-(5'-adenylyl)-L-tyrosyl-[protein] + diphosphate. It carries out the reaction L-histidyl-[protein] + UTP = N(tele)-(5'-uridylyl)-L-histidyl-[protein] + diphosphate. The catalysed reaction is L-seryl-[protein] + UTP = O-(5'-uridylyl)-L-seryl-[protein] + diphosphate. The enzyme catalyses L-tyrosyl-[protein] + UTP = O-(5'-uridylyl)-L-tyrosyl-[protein] + diphosphate. Its function is as follows. Nucleotidyltransferase involved in the post-translational modification of proteins. It can catalyze the addition of adenosine monophosphate (AMP) or uridine monophosphate (UMP) to a protein, resulting in modifications known as AMPylation and UMPylation. The chain is Protein nucleotidyltransferase YdiU from Hydrogenovibrio crunogenus (strain DSM 25203 / XCL-2) (Thiomicrospira crunogena).